Here is a 466-residue protein sequence, read N- to C-terminus: Ribulose bisphosphate carboxylase large chain (466 aa).

Lysine 5 carries the post-translational modification N6,N6,N6-trimethyllysine. Substrate is bound by residues asparagine 114 and threonine 164. The active-site Proton acceptor is lysine 166. Residue lysine 168 coordinates substrate. Residues lysine 192, aspartate 194, and glutamate 195 each contribute to the Mg(2+) site. An N6-carboxylysine modification is found at lysine 192. Residue histidine 285 is the Proton acceptor of the active site. Residues arginine 286, histidine 318, and serine 370 each contribute to the substrate site.

Belongs to the RuBisCO large chain family. Type I subfamily. As to quaternary structure, heterohexadecamer of 8 large chains and 8 small chains; disulfide-linked. The disulfide link is formed within the large subunit homodimers. Requires Mg(2+) as cofactor. Post-translationally, the disulfide bond which can form in the large chain dimeric partners within the hexadecamer appears to be associated with oxidative stress and protein turnover.

Its subcellular location is the plastid. It is found in the chloroplast. The catalysed reaction is 2 (2R)-3-phosphoglycerate + 2 H(+) = D-ribulose 1,5-bisphosphate + CO2 + H2O. It carries out the reaction D-ribulose 1,5-bisphosphate + O2 = 2-phosphoglycolate + (2R)-3-phosphoglycerate + 2 H(+). RuBisCO catalyzes two reactions: the carboxylation of D-ribulose 1,5-bisphosphate, the primary event in carbon dioxide fixation, as well as the oxidative fragmentation of the pentose substrate in the photorespiration process. Both reactions occur simultaneously and in competition at the same active site. The sequence is that of Ribulose bisphosphate carboxylase large chain from Isophysis tasmanica.